A 91-amino-acid polypeptide reads, in one-letter code: Large ribosomal subunit protein bL27 (91 aa).

A disordered region spans residues 1 to 22; sequence MAHKKAGGSSRNGRDSAGRRLG.

The protein belongs to the bacterial ribosomal protein bL27 family.

The polypeptide is Large ribosomal subunit protein bL27 (Methylocella silvestris (strain DSM 15510 / CIP 108128 / LMG 27833 / NCIMB 13906 / BL2)).